The sequence spans 131 residues: Prefoldin subunit beta (131 aa).

2 disordered regions span residues 19-41 (LQETAQQVAQQKQQAETQLRESE) and 112-131 (LQGGAGGGPMGPGGPGAGGA). The segment covering 20 to 35 (QETAQQVAQQKQQAET) has biased composition (low complexity). The segment covering 114 to 131 (GGAGGGPMGPGGPGAGGA) has biased composition (gly residues).

This sequence belongs to the prefoldin subunit beta family. Heterohexamer of two alpha and four beta subunits.

The protein localises to the cytoplasm. In terms of biological role, molecular chaperone capable of stabilizing a range of proteins. Seems to fulfill an ATP-independent, HSP70-like function in archaeal de novo protein folding. This is Prefoldin subunit beta from Natronomonas pharaonis (strain ATCC 35678 / DSM 2160 / CIP 103997 / JCM 8858 / NBRC 14720 / NCIMB 2260 / Gabara) (Halobacterium pharaonis).